Here is a 281-residue protein sequence, read N- to C-terminus: N-acetylmuramic acid 6-phosphate etherase (281 aa).

The region spanning 63 to 226 is the SIS domain; it reads IVPRMKQGGR…TTSVMIQLGR (164 aa). E91 functions as the Proton donor in the catalytic mechanism. E122 is an active-site residue.

It belongs to the GCKR-like family. MurNAc-6-P etherase subfamily. In terms of assembly, homodimer.

The catalysed reaction is N-acetyl-D-muramate 6-phosphate + H2O = N-acetyl-D-glucosamine 6-phosphate + (R)-lactate. It participates in amino-sugar metabolism; N-acetylmuramate degradation. Specifically catalyzes the cleavage of the D-lactyl ether substituent of MurNAc 6-phosphate, producing GlcNAc 6-phosphate and D-lactate. This is N-acetylmuramic acid 6-phosphate etherase from Bacteroides fragilis (strain YCH46).